Reading from the N-terminus, the 286-residue chain is Non-homologous end joining protein Ku (286 aa).

The Ku domain maps to 10 to 175 (TVGLVSFPVR…EEVREPDFVV (166 aa)). Positions 226 to 242 (ERQERQRREAGEVRQAD) are enriched in basic and acidic residues. The tract at residues 226 to 270 (ERQERQRREAGEVRQADETDEAAETEVPEVDIPASRAPGETGGEL) is disordered. Residues 243 to 254 (ETDEAAETEVPE) are compositionally biased toward acidic residues.

This sequence belongs to the prokaryotic Ku family. In terms of assembly, homodimer. Interacts with LigD.

In terms of biological role, with LigD forms a non-homologous end joining (NHEJ) DNA repair enzyme, which repairs dsDNA breaks with reduced fidelity. Binds linear dsDNA with 5'- and 3'- overhangs but not closed circular dsDNA nor ssDNA. Recruits and stimulates the ligase activity of LigD. The chain is Non-homologous end joining protein Ku from Actinosynnema mirum (strain ATCC 29888 / DSM 43827 / JCM 3225 / NBRC 14064 / NCIMB 13271 / NRRL B-12336 / IMRU 3971 / 101).